A 553-amino-acid chain; its full sequence is Dihydroxy-acid dehydratase (553 aa).

Asp78 serves as a coordination point for Mg(2+). Cys119 provides a ligand contact to [2Fe-2S] cluster. Positions 120 and 121 each coordinate Mg(2+). Lys121 carries the N6-carboxylysine modification. Cys193 contributes to the [2Fe-2S] cluster binding site. Mg(2+) is bound at residue Glu441. Ser467 functions as the Proton acceptor in the catalytic mechanism.

It belongs to the IlvD/Edd family. Homodimer. [2Fe-2S] cluster serves as cofactor. It depends on Mg(2+) as a cofactor.

The catalysed reaction is (2R)-2,3-dihydroxy-3-methylbutanoate = 3-methyl-2-oxobutanoate + H2O. The enzyme catalyses (2R,3R)-2,3-dihydroxy-3-methylpentanoate = (S)-3-methyl-2-oxopentanoate + H2O. The protein operates within amino-acid biosynthesis; L-isoleucine biosynthesis; L-isoleucine from 2-oxobutanoate: step 3/4. It participates in amino-acid biosynthesis; L-valine biosynthesis; L-valine from pyruvate: step 3/4. In terms of biological role, functions in the biosynthesis of branched-chain amino acids. Catalyzes the dehydration of (2R,3R)-2,3-dihydroxy-3-methylpentanoate (2,3-dihydroxy-3-methylvalerate) into 2-oxo-3-methylpentanoate (2-oxo-3-methylvalerate) and of (2R)-2,3-dihydroxy-3-methylbutanoate (2,3-dihydroxyisovalerate) into 2-oxo-3-methylbutanoate (2-oxoisovalerate), the penultimate precursor to L-isoleucine and L-valine, respectively. The polypeptide is Dihydroxy-acid dehydratase (Trichlorobacter lovleyi (strain ATCC BAA-1151 / DSM 17278 / SZ) (Geobacter lovleyi)).